Consider the following 261-residue polypeptide: Single-strand annealing weakened protein 1 (261 aa).

As to quaternary structure, interacts with MSH2, MSH3, RAD1, RAD10, RAD51 and RAD52.

The protein localises to the nucleus. Its function is as follows. Catalyzes 3'-non-homologous tail removal of RAD1/RAD10-dependent single-strand annealing recombination intermediates. Plays a key role in targeting RAD1/RAD10 complex to 3'-flap cleavage substrate in recombination. Also contributes to the integrity of ribosomal DNA arrays. The chain is Single-strand annealing weakened protein 1 (SAW1) from Saccharomyces cerevisiae (strain ATCC 204508 / S288c) (Baker's yeast).